The primary structure comprises 94 residues: Neutrophil defensin 3 (94 aa).

The signal sequence occupies residues 1 to 19 (MRTLAILAAILLVALQAQA). A propeptide spanning residues 20–38 (EPLQARADEVAAAPEQIAA) is cleaved from the precursor. Intrachain disulfides connect cysteine 66–cysteine 94, cysteine 68–cysteine 83, and cysteine 73–cysteine 93.

This sequence belongs to the alpha-defensin family. In terms of assembly, dimer. As to quaternary structure, (Microbial infection) Interacts with herpes virus 1 HHV-1 envelope glycoprotein B; this interaction inhibits viral infection.

The protein localises to the secreted. In terms of biological role, effector molecule of the innate immune system that acts via antibiotic-like properties against a broad array of infectious agents including bacteria, fungi, and viruses. Possesses the ability to neutralize bacterial toxins such as B.anthracis lethal factor, Clostridium difficile cytotoxin B as well as leukocidin produced by Staphylococcus aureus. Also blocks herpes simplex virus infection by interacting with envelope glycoprotein B and thus preventing its binding to heparan sulfate, the receptor for attachment. The protein is Neutrophil defensin 3 (DEFA3) of Homo sapiens (Human).